Here is a 165-residue protein sequence, read N- to C-terminus: Large ribosomal subunit protein uL10 (165 aa).

This sequence belongs to the universal ribosomal protein uL10 family. Part of the ribosomal stalk of the 50S ribosomal subunit. The N-terminus interacts with L11 and the large rRNA to form the base of the stalk. The C-terminus forms an elongated spine to which L12 dimers bind in a sequential fashion forming a multimeric L10(L12)X complex.

Forms part of the ribosomal stalk, playing a central role in the interaction of the ribosome with GTP-bound translation factors. In Enterobacter sp. (strain 638), this protein is Large ribosomal subunit protein uL10.